We begin with the raw amino-acid sequence, 433 residues long: Homogentisate 1,2-dioxygenase (433 aa).

The active-site Proton acceptor is the histidine 288. The Fe cation site is built by histidine 331 and glutamate 337. Homogentisate-binding residues include tyrosine 346 and histidine 367. Fe cation is bound at residue histidine 367.

This sequence belongs to the homogentisate dioxygenase family. Hexamer; dimer of trimers. Requires Fe cation as cofactor.

It catalyses the reaction homogentisate + O2 = 4-maleylacetoacetate + H(+). Its pathway is amino-acid degradation; L-phenylalanine degradation; acetoacetate and fumarate from L-phenylalanine: step 4/6. Functionally, involved in the catabolism of homogentisate (2,5-dihydroxyphenylacetate or 2,5-OH-PhAc), a central intermediate in the degradation of phenylalanine and tyrosine. Catalyzes the oxidative ring cleavage of the aromatic ring of homogentisate to yield maleylacetoacetate. The sequence is that of Homogentisate 1,2-dioxygenase from Pseudomonas putida (strain ATCC 700007 / DSM 6899 / JCM 31910 / BCRC 17059 / LMG 24140 / F1).